A 479-amino-acid chain; its full sequence is Anaerobic nitric oxide reductase flavorubredoxin (479 aa).

The segment at 30-210 (LRGSSYNSYL…PFSRLVTPKI (181 aa)) is zinc metallo-hydrolase. H79, E81, D83, H147, D166, and H227 together coordinate Fe cation. The Flavodoxin-like domain maps to 254-393 (ITIFYDTMSN…LCRQHGRDIA (140 aa)). Residues 260–264 (TMSNN) and 342–369 (AFGS…EMSL) contribute to the FMN site. Positions 423–474 (GPKMQCSVCQWIYDPALGEPLQDVAPGTPWSDVPDNFLCPECSLGKDVFDVL) constitute a Rubredoxin-like domain. Positions 428, 431, 461, and 464 each coordinate Fe cation.

The protein in the N-terminal section; belongs to the zinc metallo-hydrolase group 3 family. Homotetramer. Fe cation serves as cofactor. Requires FMN as cofactor.

It is found in the cytoplasm. The protein operates within nitrogen metabolism; nitric oxide reduction. Its function is as follows. Anaerobic nitric oxide reductase; uses NADH to detoxify nitric oxide (NO), protecting several 4Fe-4S NO-sensitive enzymes. Has at least 2 reductase partners, only one of which (NorW, flavorubredoxin reductase) has been identified. NO probably binds to the di-iron center; electrons enter from the NorW at rubredoxin and are transferred sequentially to the FMN center and the di-iron center. Also able to function as an aerobic oxygen reductase. The polypeptide is Anaerobic nitric oxide reductase flavorubredoxin (Salmonella arizonae (strain ATCC BAA-731 / CDC346-86 / RSK2980)).